Consider the following 338-residue polypeptide: Heat-inducible transcription repressor HrcA (338 aa).

Belongs to the HrcA family.

In terms of biological role, negative regulator of class I heat shock genes (grpE-dnaK-dnaJ and groELS operons). Prevents heat-shock induction of these operons. This Bacillus mycoides (strain KBAB4) (Bacillus weihenstephanensis) protein is Heat-inducible transcription repressor HrcA.